The chain runs to 220 residues: 7-cyano-7-deazaguanine synthase (220 aa).

Residue 10-20 (FSGGQDSTTCL) participates in ATP binding. Zn(2+) is bound by residues C186, C195, C198, and C201.

Belongs to the QueC family. As to quaternary structure, homodimer. Zn(2+) is required as a cofactor.

The catalysed reaction is 7-carboxy-7-deazaguanine + NH4(+) + ATP = 7-cyano-7-deazaguanine + ADP + phosphate + H2O + H(+). It functions in the pathway purine metabolism; 7-cyano-7-deazaguanine biosynthesis. Functionally, catalyzes the ATP-dependent conversion of 7-carboxy-7-deazaguanine (CDG) to 7-cyano-7-deazaguanine (preQ(0)). The chain is 7-cyano-7-deazaguanine synthase from Bacillus thuringiensis (strain Al Hakam).